Consider the following 354-residue polypeptide: Uroporphyrinogen decarboxylase (354 aa).

Substrate-binding positions include 27 to 31 (RQAGR), aspartate 77, tyrosine 154, threonine 209, and histidine 327.

It belongs to the uroporphyrinogen decarboxylase family. As to quaternary structure, homodimer.

Its subcellular location is the cytoplasm. The enzyme catalyses uroporphyrinogen III + 4 H(+) = coproporphyrinogen III + 4 CO2. It participates in porphyrin-containing compound metabolism; protoporphyrin-IX biosynthesis; coproporphyrinogen-III from 5-aminolevulinate: step 4/4. Functionally, catalyzes the decarboxylation of four acetate groups of uroporphyrinogen-III to yield coproporphyrinogen-III. The polypeptide is Uroporphyrinogen decarboxylase (Enterobacter sp. (strain 638)).